The chain runs to 197 residues: MGDQRGTRVYVGNLTDKVKKDDLEGEFTKYGKLNSVWIAFNPPGFAFVEFEHRDDAEKACDILNGSELLGSQLRVEISKGRPRQGRRGGPMDRGGRRGDFGRHSITSGGSGGGGFRQRGSSGSSSRHTERGYSSGRSGASSYNGREGGGSGFNRREVYGGGRDSSRYSSGSSASYGRTGGQSAGRFRSRSPVGNHRF.

An RRM domain is found at 7-80 (TRVYVGNLTD…SQLRVEISKG (74 aa)). Residues 74-197 (RVEISKGRPR…SRSPVGNHRF (124 aa)) are disordered. The span at 89–102 (GPMDRGGRRGDFGR) shows a compositional bias: basic and acidic residues. Threonine 106 bears the Phosphothreonine mark. Composition is skewed to low complexity over residues 117–144 (QRGS…SYNG) and 166–176 (RYSSGSSASYG). A phosphoserine mark is found at serine 168, serine 171, serine 174, serine 188, and serine 190.

The protein belongs to the splicing factor SR family. Extensively phosphorylated on serine residues in the RS domain.

Its subcellular location is the nucleus. Functionally, may control important aspects of development. This chain is RNA-binding protein Rsf1 (Rsf1), found in Drosophila melanogaster (Fruit fly).